The chain runs to 170 residues: Adenine phosphoribosyltransferase (170 aa).

This sequence belongs to the purine/pyrimidine phosphoribosyltransferase family. As to quaternary structure, homodimer.

It is found in the cytoplasm. The enzyme catalyses AMP + diphosphate = 5-phospho-alpha-D-ribose 1-diphosphate + adenine. The protein operates within purine metabolism; AMP biosynthesis via salvage pathway; AMP from adenine: step 1/1. Catalyzes a salvage reaction resulting in the formation of AMP, that is energically less costly than de novo synthesis. This Brevibacillus brevis (strain 47 / JCM 6285 / NBRC 100599) protein is Adenine phosphoribosyltransferase.